Reading from the N-terminus, the 180-residue chain is Crossover junction endodeoxyribonuclease RuvC (180 aa).

Active-site residues include aspartate 7, glutamate 66, and aspartate 138. Mg(2+) is bound by residues aspartate 7, glutamate 66, and aspartate 138.

It belongs to the RuvC family. As to quaternary structure, homodimer which binds Holliday junction (HJ) DNA. The HJ becomes 2-fold symmetrical on binding to RuvC with unstacked arms; it has a different conformation from HJ DNA in complex with RuvA. In the full resolvosome a probable DNA-RuvA(4)-RuvB(12)-RuvC(2) complex forms which resolves the HJ. It depends on Mg(2+) as a cofactor.

It is found in the cytoplasm. The catalysed reaction is Endonucleolytic cleavage at a junction such as a reciprocal single-stranded crossover between two homologous DNA duplexes (Holliday junction).. Its function is as follows. The RuvA-RuvB-RuvC complex processes Holliday junction (HJ) DNA during genetic recombination and DNA repair. Endonuclease that resolves HJ intermediates. Cleaves cruciform DNA by making single-stranded nicks across the HJ at symmetrical positions within the homologous arms, yielding a 5'-phosphate and a 3'-hydroxyl group; requires a central core of homology in the junction. The consensus cleavage sequence is 5'-(A/T)TT(C/G)-3'. Cleavage occurs on the 3'-side of the TT dinucleotide at the point of strand exchange. HJ branch migration catalyzed by RuvA-RuvB allows RuvC to scan DNA until it finds its consensus sequence, where it cleaves and resolves the cruciform DNA. In Burkholderia multivorans (strain ATCC 17616 / 249), this protein is Crossover junction endodeoxyribonuclease RuvC.